The chain runs to 332 residues: Glycerol-3-phosphate dehydrogenase [NAD(P)+] (332 aa).

NADPH contacts are provided by Ser-11, Phe-12, Lys-32, and Lys-106. 3 residues coordinate sn-glycerol 3-phosphate: Lys-106, Gly-137, and Ser-139. Ala-141 contacts NADPH. Sn-glycerol 3-phosphate-binding residues include Lys-192, Asp-245, Ser-255, Arg-256, and Asn-257. Lys-192 (proton acceptor) is an active-site residue. Arg-256 contacts NADPH. The NADPH site is built by Val-280 and Glu-282.

Belongs to the NAD-dependent glycerol-3-phosphate dehydrogenase family.

Its subcellular location is the cytoplasm. The catalysed reaction is sn-glycerol 3-phosphate + NAD(+) = dihydroxyacetone phosphate + NADH + H(+). The enzyme catalyses sn-glycerol 3-phosphate + NADP(+) = dihydroxyacetone phosphate + NADPH + H(+). Its pathway is membrane lipid metabolism; glycerophospholipid metabolism. Functionally, catalyzes the reduction of the glycolytic intermediate dihydroxyacetone phosphate (DHAP) to sn-glycerol 3-phosphate (G3P), the key precursor for phospholipid synthesis. This is Glycerol-3-phosphate dehydrogenase [NAD(P)+] from Staphylococcus carnosus (strain TM300).